The following is a 468-amino-acid chain: Ubiquinone biosynthesis monooxygenase COQ6, mitochondrial (468 aa).

A mitochondrion-targeting transit peptide spans 1–28 (MAARLVSRCGAVRAAPHSGPLVSWRRWS).

Belongs to the UbiH/COQ6 family. Component of a multi-subunit COQ enzyme complex, composed of at least COQ3, COQ4, COQ5, COQ6, COQ7 and COQ9. Interacts with COQ8B and COQ7. It depends on FAD as a cofactor. Widely expressed.

Its subcellular location is the mitochondrion inner membrane. The protein resides in the golgi apparatus. The protein localises to the cell projection. The catalysed reaction is 4-hydroxy-3-(all-trans-decaprenyl)benzoate + 2 reduced [2Fe-2S]-[ferredoxin] + O2 + 2 H(+) = 3,4-dihydroxy-5-(all-trans-decaprenyl)benzoate + 2 oxidized [2Fe-2S]-[ferredoxin] + H2O. It carries out the reaction 2-methoxy-6-(all-trans-decaprenyl)phenol + 2 reduced [2Fe-2S]-[ferredoxin] + O2 + 2 H(+) = 2-methoxy-6-(all-trans-decaprenyl)benzene-1,4-diol + 2 oxidized [2Fe-2S]-[ferredoxin] + H2O. The protein operates within cofactor biosynthesis; ubiquinone biosynthesis. In terms of biological role, FAD-dependent monooxygenase required for two non-consecutive steps during ubiquinone biosynthesis. Required for the C5-ring hydroxylation during ubiquinone biosynthesis by catalyzing the hydroxylation of 4-hydroxy-3-(all-trans-decaprenyl)benzoic acid to 3,4-dihydroxy-5-(all-trans-decaprenyl)benzoic acid. Also acts downstream of COQ4, for the C1-hydroxylation during ubiquinone biosynthesis by catalyzing the hydroxylation of 2-methoxy-6-(all-trans-decaprenyl)phenol to 2-methoxy-6-(all-trans-decaprenyl)benzene-1,4-diol. The electrons required for the hydroxylation reaction are funneled indirectly to COQ6 from NADPH via a ferredoxin/ferredoxin reductase system composed of FDX2 and FDXR. This is Ubiquinone biosynthesis monooxygenase COQ6, mitochondrial from Homo sapiens (Human).